The sequence spans 370 residues: S-adenosylmethionine decarboxylase proenzyme (370 aa).

Residue Phe28 coordinates substrate. Residues Glu29 and Glu32 contribute to the active site. Glu85 is a binding site for substrate. Ser86 (schiff-base intermediate with substrate; via pyruvic acid) is an active-site residue. A Pyruvic acid (Ser); by autocatalysis modification is found at Ser86. Cys100 acts as the Proton donor; for catalytic activity in catalysis. Active-site proton acceptor; for processing activity residues include Ser249 and His262. Glu266 serves as a coordination point for substrate.

Belongs to the eukaryotic AdoMetDC family. As to quaternary structure, forms a heterodimer with catalytically inactive AdoMetDC prozyme; heterodimerization is required to activate AdoMetDC. Pyruvate serves as cofactor. Post-translationally, is synthesized initially as an inactive proenzyme. Formation of the active enzyme involves a self-maturation process in which the active site pyruvoyl group is generated from an internal serine residue via an autocatalytic post-translational modification. Two non-identical subunits are generated from the proenzyme in this reaction, and the pyruvate is formed at the N-terminus of the alpha chain, which is derived from the carboxyl end of the proenzyme. The post-translation cleavage follows an unusual pathway, termed non-hydrolytic serinolysis, in which the side chain hydroxyl group of the serine supplies its oxygen atom to form the C-terminus of the beta chain, while the remainder of the serine residue undergoes an oxidative deamination to produce ammonia and the pyruvoyl group blocking the N-terminus of the alpha chain.

It carries out the reaction S-adenosyl-L-methionine + H(+) = S-adenosyl 3-(methylsulfanyl)propylamine + CO2. The protein operates within amine and polyamine biosynthesis; S-adenosylmethioninamine biosynthesis; S-adenosylmethioninamine from S-adenosyl-L-methionine: step 1/1. Its activity is regulated as follows. Allosterically activated by AdoMetDC prozyme. Activated by putrescine and to a lesser extent by spermidine, norspermidine and spermine. Inhibited by 5'-([(Z)-4-amino-2-butenyl]methylamino)-5'-deoxyadenosine (MDL 73811). Functionally, in association with the catalytically inactive AdoMetDC prozyme, catalyzes the decarboxylation of S-adenosyl-L-methionine which is essential for the biosynthesis of the polyamine spermidine. Required for growth and survival during the bloodstream life cycle stage. The sequence is that of S-adenosylmethionine decarboxylase proenzyme from Trypanosoma brucei brucei.